A 90-amino-acid polypeptide reads, in one-letter code: Bombyxin B-9 (90 aa).

Positions 1–20 (MMKTAVMFILVVVISLTYSS) are cleaved as a signal peptide. 3 cysteine pairs are disulfide-bonded: Cys30-Cys75, Cys42-Cys88, and Cys74-Cys79. The propeptide at 49–64 (GGAQYAPYWQETYLRS) is c peptide like.

This sequence belongs to the insulin family. In terms of assembly, heterodimer of a B chain and an A chain linked by two disulfide bonds.

The protein resides in the secreted. Its function is as follows. Brain peptide responsible for activation of prothoracic glands to produce ecdysone in insects. This chain is Bombyxin B-9 (BBXB9), found in Bombyx mori (Silk moth).